The sequence spans 480 residues: UDP-glucose 6-dehydrogenase 4 (480 aa).

NAD(+) is bound by residues 3 to 20 (KICCIGAGYVGGPTMAVI), Asp33, Arg38, Thr90, Thr128, and Glu161. Residues 157–161 (EFLAE), Lys216, 216–223 (KLAANAFL), 256–269 (RIGSKFLNASVGFG), and Gly269 contribute to the substrate site. Cys272 (nucleophile) is an active-site residue. Lys275 serves as a coordination point for NAD(+). Substrate-binding residues include Phe334 and Lys335. Arg342 provides a ligand contact to NAD(+). Residue Arg447 participates in substrate binding.

Belongs to the UDP-glucose/GDP-mannose dehydrogenase family.

The enzyme catalyses UDP-alpha-D-glucose + 2 NAD(+) + H2O = UDP-alpha-D-glucuronate + 2 NADH + 3 H(+). It participates in nucleotide-sugar biosynthesis; UDP-alpha-D-glucuronate biosynthesis; UDP-alpha-D-glucuronate from UDP-alpha-D-glucose: step 1/1. With respect to regulation, inhibited by UDP-xylose. Functionally, involved in the biosynthesis of UDP-glucuronic acid (UDP-GlcA), providing nucleotide sugars for cell-wall polymers. This is UDP-glucose 6-dehydrogenase 4 from Arabidopsis thaliana (Mouse-ear cress).